The chain runs to 216 residues: Somatotropin (216 aa).

The N-terminal stretch at 1-26 is a signal peptide; the sequence is MAAGPRTSALLAFALLCLPWTREVGA. Residue H45 coordinates Zn(2+). Residues C78 and C189 are joined by a disulfide bond. S131 is modified (phosphoserine). E198 serves as a coordination point for Zn(2+). C206 and C214 form a disulfide bridge.

Belongs to the somatotropin/prolactin family.

It localises to the secreted. In terms of biological role, plays an important role in growth control. Its major role in stimulating body growth is to stimulate the liver and other tissues to secrete IGF1. It stimulates both the differentiation and proliferation of myoblasts. It also stimulates amino acid uptake and protein synthesis in muscle and other tissues. The polypeptide is Somatotropin (GH1) (Sus scrofa (Pig)).